The primary structure comprises 511 residues: Sodium/hydrogen exchanger 9B1 (511 aa).

Residues 1–10 (MHTTESKDEH) are compositionally biased toward basic and acidic residues. The disordered stretch occupies residues 1 to 41 (MHTTESKDEHLEDENFQTSTTPQSLIDPNSTAHEETKTVIS). Residues 16 to 31 (FQTSTTPQSLIDPNST) are compositionally biased toward polar residues. 13 helical membrane-spanning segments follow: residues 67-87 (IITNGVILFVIWCTTWSVLGS), 95-115 (LFGLLIIFCSAIIGGKILQLI), 116-136 (RIPLVPPLPPLLGMLLAGFTI), 152-172 (WSSILRSTALTVILIRAGLGL), 187-207 (LAVGPCLMEASAAAVFSHFIM), 215-235 (FLLGFVLGAVSPAIVVPSMMV), 260-280 (VLAITGFNTCLSIVFSSGGIV), 284-304 (IASIKSVSISLLAGIVLGFFV), 337-357 (IGLHGTGGLFTLVLSFIAGTK), 368-388 (IITNVWDIFQPLLFGLVGAEV), 398-418 (IGIFVATLSLALCVRILVTYI), 431-451 (IFIALAWMPKATVQAVLGPLV), and 472-492 (VAFLAILITAPNGALLMGILG).

The protein belongs to the monovalent cation:proton antiporter 1 (CPA1) transporter (TC 2.A.36) family.

It is found in the cell projection. The protein resides in the cilium. It localises to the flagellum membrane. Functionally, sperm-specific Na(+)/H(+) exchanger involved in intracellular pH regulation of spermatozoa. Involved in sperm motility and fertility. This is Sodium/hydrogen exchanger 9B1 (SLC9B1) from Macaca fascicularis (Crab-eating macaque).